Reading from the N-terminus, the 450-residue chain is Chromosomal replication initiator protein DnaA (450 aa).

The domain I, interacts with DnaA modulators stretch occupies residues 1 to 79 (MENIHDLWNR…TGEELLIKFI (79 aa)). The segment at 79–111 (ITPPNQSEDDFEFQRSSKKHRKPYEESTDFPQS) is domain II. A domain III, AAA+ region region spans residues 112–328 (MLNPKYTFDT…GALIRVVAYS (217 aa)). ATP-binding residues include Gly156, Gly158, Lys159, and Thr160. The segment at 329-450 (SLINKEITAD…KEIEEKLKQL (122 aa)) is domain IV, binds dsDNA.

The protein belongs to the DnaA family. As to quaternary structure, oligomerizes as a right-handed, spiral filament on DNA at oriC.

It localises to the cytoplasm. Functionally, plays an essential role in the initiation and regulation of chromosomal replication. ATP-DnaA binds to the origin of replication (oriC) to initiate formation of the DNA replication initiation complex once per cell cycle. Binds the DnaA box (a 9 base pair repeat at the origin) and separates the double-stranded (ds)DNA. Forms a right-handed helical filament on oriC DNA; dsDNA binds to the exterior of the filament while single-stranded (ss)DNA is stabiized in the filament's interior. The ATP-DnaA-oriC complex binds and stabilizes one strand of the AT-rich DNA unwinding element (DUE), permitting loading of DNA polymerase. After initiation quickly degrades to an ADP-DnaA complex that is not apt for DNA replication. Binds acidic phospholipids. This chain is Chromosomal replication initiator protein DnaA, found in Geobacillus sp. (strain WCH70).